Here is a 621-residue protein sequence, read N- to C-terminus: Amino-acid acetyltransferase, mitochondrial (621 aa).

The transit peptide at 1–77 (MIPRAPPSTQ…RSYLASFGVQ (77 aa)) directs the protein to the mitochondrion. The tract at residues 213-233 (PKPGSEEESEPGFSPPETHIY) is disordered. The N-acetyltransferase domain maps to 424–600 (LPIRVVRSVS…GSAGLSFIED (177 aa)).

This sequence belongs to the acetyltransferase family.

It localises to the mitochondrion. The catalysed reaction is L-glutamate + acetyl-CoA = N-acetyl-L-glutamate + CoA + H(+). It functions in the pathway amino-acid biosynthesis; L-arginine biosynthesis; N(2)-acetyl-L-ornithine from L-glutamate: step 1/4. Its function is as follows. N-acetylglutamate synthase involved in arginine biosynthesis. The chain is Amino-acid acetyltransferase, mitochondrial (ARG2) from Coprinopsis cinerea (strain Okayama-7 / 130 / ATCC MYA-4618 / FGSC 9003) (Inky cap fungus).